The primary structure comprises 328 residues: Tetraacyldisaccharide 4'-kinase (328 aa).

55–62 (TAGGNGKT) is an ATP binding site.

This sequence belongs to the LpxK family.

It carries out the reaction a lipid A disaccharide + ATP = a lipid IVA + ADP + H(+). The protein operates within glycolipid biosynthesis; lipid IV(A) biosynthesis; lipid IV(A) from (3R)-3-hydroxytetradecanoyl-[acyl-carrier-protein] and UDP-N-acetyl-alpha-D-glucosamine: step 6/6. Transfers the gamma-phosphate of ATP to the 4'-position of a tetraacyldisaccharide 1-phosphate intermediate (termed DS-1-P) to form tetraacyldisaccharide 1,4'-bis-phosphate (lipid IVA). This Escherichia coli O6:K15:H31 (strain 536 / UPEC) protein is Tetraacyldisaccharide 4'-kinase.